Here is a 123-residue protein sequence, read N- to C-terminus: Small ribosomal subunit protein uS12 (123 aa).

D89 is modified (3-methylthioaspartic acid).

Belongs to the universal ribosomal protein uS12 family. In terms of assembly, part of the 30S ribosomal subunit. Contacts proteins S8 and S17. May interact with IF1 in the 30S initiation complex.

Functionally, with S4 and S5 plays an important role in translational accuracy. Interacts with and stabilizes bases of the 16S rRNA that are involved in tRNA selection in the A site and with the mRNA backbone. Located at the interface of the 30S and 50S subunits, it traverses the body of the 30S subunit contacting proteins on the other side and probably holding the rRNA structure together. The combined cluster of proteins S8, S12 and S17 appears to hold together the shoulder and platform of the 30S subunit. This Caulobacter sp. (strain K31) protein is Small ribosomal subunit protein uS12.